Reading from the N-terminus, the 284-residue chain is Sulfotransferase 2A1 (284 aa).

3'-phosphoadenylyl sulfate-binding residues include lysine 43, serine 44, glycine 45, threonine 46, asparagine 47, and tryptophan 48. The active-site Proton acceptor is histidine 98. Arginine 120, serine 128, tyrosine 183, serine 217, methionine 222, arginine 246, lysine 247, and glycine 248 together coordinate 3'-phosphoadenylyl sulfate.

The protein belongs to the sulfotransferase 1 family. Homodimer.

Its subcellular location is the cytoplasm. The enzyme catalyses an alcohol + 3'-phosphoadenylyl sulfate = an alkyl sulfate + adenosine 3',5'-bisphosphate + H(+). It carries out the reaction taurolithocholate + 3'-phosphoadenylyl sulfate = taurolithocholate 3-sulfate + adenosine 3',5'-bisphosphate + H(+). The catalysed reaction is lithocholate + 3'-phosphoadenylyl sulfate = lithocholate sulfate + adenosine 3',5'-bisphosphate + H(+). It catalyses the reaction (24S)-hydroxycholesterol + 3'-phosphoadenylyl sulfate = (24S)-hydroxycholesterol 24-sulfate + adenosine 3',5'-bisphosphate + H(+). The enzyme catalyses (24S)-hydroxycholesterol + 3'-phosphoadenylyl sulfate = (24S)-hydroxycholesterol 3-sulfate + adenosine 3',5'-bisphosphate + H(+). It carries out the reaction (24S)-hydroxycholesterol 24-sulfate + 3'-phosphoadenylyl sulfate = (24S)-hydroxycholesterol 3,24-disulfate + adenosine 3',5'-bisphosphate + H(+). The catalysed reaction is 3beta-hydroxyandrost-5-en-17-one + 3'-phosphoadenylyl sulfate = dehydroepiandrosterone 3-sulfate + adenosine 3',5'-bisphosphate + H(+). It catalyses the reaction pregnenolone + 3'-phosphoadenylyl sulfate = pregnenolone sulfate + adenosine 3',5'-bisphosphate + H(+). The enzyme catalyses androsterone + 3'-phosphoadenylyl sulfate = androsterone 3alpha-sulfate + adenosine 3',5'-bisphosphate + H(+). In terms of biological role, sulfotransferase that utilizes 3'-phospho-5'-adenylyl sulfate (PAPS) as sulfonate donor to catalyze the sulfonation of steroids and bile acids in the liver and adrenal glands. Mediates the sulfation of a wide range of steroids and sterols, including pregnenolone, androsterone, DHEA, bile acids, cholesterol and as well many xenobiotics that contain alcohol and phenol functional groups. Sulfonation increases the water solubility of most compounds, and therefore their renal excretion, but it can also result in bioactivation to form active metabolites. Plays an important role in maintening steroid and lipid homeostasis. Plays a key role in bile acid metabolism. In addition, catalyzes the metabolic activation of potent carcinogenic polycyclic arylmethanols. This Rattus norvegicus (Rat) protein is Sulfotransferase 2A1 (Sult2a1).